A 528-amino-acid chain; its full sequence is MSVSRKDWSALSSLARQRTLEDEEEQERERRRRHRNLSSTTDDESPKLTQNGAQRSVERLPSVEEAEVSKPSPPASKDEDEDFQAILRTRKERRQRRQVVEAVQAPVQERPEAEEERDSLGPEQTSSQPLVPKKKVEALPRRRLSREQRGPWAQDEERLKNRELAEGEKRLPEETVAQQKTLVSEKTPVSEKTPVPAKRLVSEKACPSEKGTATEKASLTEKRHSPEKLVPEKTSVTEKSPVPEKTLVSLKTAAPERRSPPVLEKAIVSEKMQERKLVSEKASIFEKSLVSEAKLTPKKAAVSEQPQTTGGSQATTREPRGRALPDKSPPSSAEQSTPAPPTKASRFPPITLQVKIPSKDEDADTPSPTLLTYSSSLKRSSPRTISFRMSPRKDNSETPLTRSASVRLPASTVKLGEKLERYHTAIQRSESVRSPGSSRTEVLVTPAGVASKRHLFEKELSGQNRTEPTSIRKENLRLSGVVTSRLNLWISKTQDSGDHGSQEVRKEASVTKRAQWGSKPSTSLDAEV.

Positions 1–404 (MSVSRKDWSA…NSETPLTRSA (404 aa)) are disordered. S38, S56, S62, S72, and S76 each carry phosphoserine. Residues 88–97 (RTRKERRQRR) are compositionally biased toward basic residues. At S119 the chain carries Phosphoserine. Over residues 134-173 (KKVEALPRRRLSREQRGPWAQDEERLKNRELAEGEKRLPE) the composition is skewed to basic and acidic residues. SEK repeat units follow at residues 184–186 (SEK), 190–192 (SEK), 202–204 (SEK), and 208–210 (SEK). The interval 184 to 281 (SEKTPVSEKT…MQERKLVSEK (98 aa)) is 6 X SEK repeats. Basic and acidic residues-rich tracts occupy residues 218–231 (SLTE…KLVP) and 267–279 (IVSE…KLVS). 2 SEK repeats span residues 269-271 (SEK) and 279-281 (SEK). Residues 304–316 (EQPQTTGGSQATT) are compositionally biased toward polar residues. 5 positions are modified to phosphoserine: S328, S358, S367, S405, and S496. The span at 365-377 (TPSPTLLTYSSSL) shows a compositional bias: low complexity. The disordered stretch occupies residues 492-528 (KTQDSGDHGSQEVRKEASVTKRAQWGSKPSTSLDAEV). The segment covering 495–510 (DSGDHGSQEVRKEASV) has biased composition (basic and acidic residues). Residues 518-528 (SKPSTSLDAEV) show a composition bias toward polar residues.

As to expression, expressed in kidney, lung and keratinocytes followed by liver, spleen and brain. Not expressed in testis, skeletal and heart muscle and in fibroblasts.

Its subcellular location is the secreted. It localises to the extracellular space. The protein localises to the extracellular matrix. It is found in the basement membrane. Anchoring filament protein which is a component of the basement membrane zone. This is Ladinin-1 (Lad1) from Mus musculus (Mouse).